A 259-amino-acid chain; its full sequence is MNRLYPHPIIAREGWPIIGGGLALSLLVSMCCGWWSLPFWVFTVFALQFFRDPAREIPQNPEAVLSPVDGRIVVVERARDPYRDVDALKISIFMNVFNVHSQKSPADCTVTKVVYNKGKFVNADLDKASTENERNAVLATTASGREITFVQVAGLVARRILCYTQAGAKLSRGERYGFIRFGSRVDMYLPVDAQAQVAIGDKVTGVKTVLARLPLTDSQADPVSQAASVETAANPSAEQQQIEAAAAKIQAAVQDVLKD.

Ser183 (schiff-base intermediate with substrate; via pyruvic acid) is an active-site residue. Position 183 is a pyruvic acid (Ser); by autocatalysis (Ser183).

The protein belongs to the phosphatidylserine decarboxylase family. PSD-A subfamily. As to quaternary structure, heterodimer of a large membrane-associated beta subunit and a small pyruvoyl-containing alpha subunit. It depends on pyruvate as a cofactor. Is synthesized initially as an inactive proenzyme. Formation of the active enzyme involves a self-maturation process in which the active site pyruvoyl group is generated from an internal serine residue via an autocatalytic post-translational modification. Two non-identical subunits are generated from the proenzyme in this reaction, and the pyruvate is formed at the N-terminus of the alpha chain, which is derived from the carboxyl end of the proenzyme. The post-translation cleavage follows an unusual pathway, termed non-hydrolytic serinolysis, in which the side chain hydroxyl group of the serine supplies its oxygen atom to form the C-terminus of the beta chain, while the remainder of the serine residue undergoes an oxidative deamination to produce ammonia and the pyruvoyl prosthetic group on the alpha chain.

The protein localises to the cell membrane. It carries out the reaction a 1,2-diacyl-sn-glycero-3-phospho-L-serine + H(+) = a 1,2-diacyl-sn-glycero-3-phosphoethanolamine + CO2. It participates in phospholipid metabolism; phosphatidylethanolamine biosynthesis; phosphatidylethanolamine from CDP-diacylglycerol: step 2/2. Functionally, catalyzes the formation of phosphatidylethanolamine (PtdEtn) from phosphatidylserine (PtdSer). In Neisseria gonorrhoeae (strain ATCC 700825 / FA 1090), this protein is Phosphatidylserine decarboxylase proenzyme.